Here is an 88-residue protein sequence, read N- to C-terminus: UPF0297 protein str1959 (88 aa).

Belongs to the UPF0297 family.

In Streptococcus thermophilus (strain CNRZ 1066), this protein is UPF0297 protein str1959.